The sequence spans 154 residues: 6,7-dimethyl-8-ribityllumazine synthase (154 aa).

5-amino-6-(D-ribitylamino)uracil-binding positions include Phe-23, 57–59 (AYE), and 81–83 (AVI). Residue 86-87 (GT) coordinates (2S)-2-hydroxy-3-oxobutyl phosphate. The active-site Proton donor is His-89. Phe-114 is a binding site for 5-amino-6-(D-ribitylamino)uracil. Residue Arg-128 participates in (2S)-2-hydroxy-3-oxobutyl phosphate binding.

Belongs to the DMRL synthase family. Forms an icosahedral capsid composed of 60 subunits, arranged as a dodecamer of pentamers.

The enzyme catalyses (2S)-2-hydroxy-3-oxobutyl phosphate + 5-amino-6-(D-ribitylamino)uracil = 6,7-dimethyl-8-(1-D-ribityl)lumazine + phosphate + 2 H2O + H(+). The protein operates within cofactor biosynthesis; riboflavin biosynthesis; riboflavin from 2-hydroxy-3-oxobutyl phosphate and 5-amino-6-(D-ribitylamino)uracil: step 1/2. Catalyzes the formation of 6,7-dimethyl-8-ribityllumazine by condensation of 5-amino-6-(D-ribitylamino)uracil with 3,4-dihydroxy-2-butanone 4-phosphate. This is the penultimate step in the biosynthesis of riboflavin. The sequence is that of 6,7-dimethyl-8-ribityllumazine synthase from Acidithiobacillus ferrooxidans (strain ATCC 23270 / DSM 14882 / CIP 104768 / NCIMB 8455) (Ferrobacillus ferrooxidans (strain ATCC 23270)).